A 259-amino-acid chain; its full sequence is Protein odd-skipped-related 1 (259 aa).

C2H2-type zinc fingers lie at residues 168–190, 196–218, and 224–246; these read FVCK…ERTH, YTCD…RYIH, and FKCQ…KTLH.

It belongs to the Odd C2H2-type zinc-finger protein family. In terms of tissue distribution, at early gastrula stage, expressed in the involuting mesoderm and endoderm. During neurulation, expressed in the pronephric primordium, following expression of osr2. During tailbud (stage 35), expressed in the rectal diverticulum and in the kidney ducts.

It is found in the nucleus. Its function is as follows. Transcriptional repressor. Required for pronephric kidney development. In Xenopus laevis (African clawed frog), this protein is Protein odd-skipped-related 1.